The sequence spans 261 residues: Metallo-beta-lactamase fold-containing protein ST1585 (261 aa).

The Zn(2+) site is built by His58, His60, Asp62, His63, His148, Asp165, and His207.

Belongs to the metallo-beta-lactamase superfamily. Monomer.

This Sulfurisphaera tokodaii (strain DSM 16993 / JCM 10545 / NBRC 100140 / 7) (Sulfolobus tokodaii) protein is Metallo-beta-lactamase fold-containing protein ST1585.